The primary structure comprises 266 residues: Small ribosomal subunit protein uS3 (266 aa).

One can recognise a KH type-2 domain in the interval 39 to 107; sequence VREYLKKKLK…PVHVNIEEIR (69 aa). A disordered region spans residues 214 to 266; the sequence is PVVEEVTEDKRPRRNARPGDRRPRRDGEGGAPGARRGGPRRGAGKPEDGKTGE. Basic and acidic residues-rich tracts occupy residues 230–241 and 257–266; these read RPGDRRPRRDGE and GKPEDGKTGE.

It belongs to the universal ribosomal protein uS3 family. Part of the 30S ribosomal subunit. Forms a tight complex with proteins S10 and S14.

In terms of biological role, binds the lower part of the 30S subunit head. Binds mRNA in the 70S ribosome, positioning it for translation. The polypeptide is Small ribosomal subunit protein uS3 (Burkholderia mallei (strain NCTC 10247)).